The primary structure comprises 1009 residues: Glutamate receptor ionotropic, delta-1 (1009 aa).

A signal peptide spans 1–20 (MEALTLWLLPWICQCVTVRA). Residues 21–436 (DSIIHIGAIF…ERPMGSRLQG (416 aa)) are interaction with CBLN1. At 21 to 562 (DSIIHIGAIF…SIFSLFAPFD (542 aa)) the chain is on the extracellular side. 3 disulfides stabilise this stretch: cysteine 80/cysteine 351, cysteine 96/cysteine 128, and cysteine 294/cysteine 306. N-linked (GlcNAc...) asparagine glycosylation is found at asparagine 131 and asparagine 200. Asparagine 422 and asparagine 498 each carry an N-linked (GlcNAc...) asparagine glycan. Residues glutamate 527, valine 530, and aspartate 531 each coordinate Ca(2+). A helical membrane pass occupies residues 563–583 (FAVWACIAAAIPVVGVLIFVL). At 584-637 (NRIQAVRSQSATQPRPSASATLHSAIWIVYGAFVQQGGESSVNSVAMRIVMGSW) the chain is on the cytoplasmic side. Residues 638-658 (WLFTLIVCSSYTANLAAFLTV) traverse the membrane as a helical segment. At 659 to 830 (SRMDNPIRTF…TEGKSLKLHS (172 aa)) the chain is on the extracellular side. Residues aspartate 753, aspartate 755, and serine 757 each contribute to the Ca(2+) site. A helical transmembrane segment spans residues 831–851 (FAGVFCILAIGLLLACLVAAL). The Cytoplasmic segment spans residues 852 to 1009 (ELWWNSNRCH…ALDTSHGTSI (158 aa)). Polar residues predominate over residues 931 to 942 (LPEQSSHGTSRT). The disordered stretch occupies residues 931 to 960 (LPEQSSHGTSRTLSSGPSSNLPLPLSSSAT). Over residues 943–958 (LSSGPSSNLPLPLSSS) the composition is skewed to low complexity.

This sequence belongs to the glutamate-gated ion channel (TC 1.A.10.1) family. GRID1 subfamily. As to quaternary structure, homodimer. Interacts (via extracellular N-terminal domain) with CBLN1 (via C1q domain), and more weakly with CBLN2; the interactions mediate the trans-synaptic adhesion complexes also with neurexins and are required for ligand-gated cation channel activity. In terms of tissue distribution, equally in forebrain and cerebellum.

The protein resides in the postsynaptic cell membrane. It carries out the reaction Ca(2+)(in) = Ca(2+)(out). The enzyme catalyses Na(+)(in) = Na(+)(out). Member of the ionotropic glutamate receptor family, which plays a crucial role in synaptic organization and signal transduction in the central nervous system. Although it shares structural features with ionotropic glutamate receptors, does not bind glutamate as a primary ligand. Instead, forms trans-synaptic adhesion complexes with presynaptic neurexins and cerebellins, regulating NMDA and AMPA receptor activity and influencing synaptic plasticity through signal transduction. In the presence of NRX1B-CBLN1, forms cation-selective channels that are proposed to be gated by glycine and D-serine. However, recent research disputes this ligand-gated cation channel activity. Cation-selective ion channel can be triggered by GRM1 in dopaminergic neurons. Also acts as a receptor for GABA, modulating inhibitory synaptic plasticity through non-ionotropic mechanisms. In Mus musculus (Mouse), this protein is Glutamate receptor ionotropic, delta-1 (Grid1).